The sequence spans 143 residues: Transcription antitermination protein NusB (143 aa).

It belongs to the NusB family.

Involved in transcription antitermination. Required for transcription of ribosomal RNA (rRNA) genes. Binds specifically to the boxA antiterminator sequence of the ribosomal RNA (rrn) operons. This chain is Transcription antitermination protein NusB, found in Methylacidiphilum infernorum (isolate V4) (Methylokorus infernorum (strain V4)).